The primary structure comprises 343 residues: MKALAKLERGPGLTLTRVKKPEVGHNDVLIKIRRTAICGTDIHIWKWDDWAQKTIPVPMHVGHEYVGEIVEMGQEVRGFSIGDRVSGEGHITCGFCRNCRAGRRHLCRNTVGVGVNREGAFAEYLAIPAFNAFKIPPEISDDLAAIFDPFGNATHTALSFNLVGEDVLITGAGPIGVMAVAIAKHVGARNVVITDINDYRLELARKMGATRAVNVSRESLRDVMADLHMTEGFDVGLEMSGVPSAFTSLLESMNHGGKVALLGIPPAQTAIDWNQVIFKGLEIKGIYGREMFETWYKMVAMLQSGLDLSPIITHRFAVDDYEKGFAAMLSGESGKVILDWADA.

Cysteine 38 contributes to the Zn(2+) binding site. Residues threonine 40 and histidine 43 each act as charge relay system in the active site. Zn(2+)-binding residues include histidine 63, glutamate 64, cysteine 93, cysteine 96, cysteine 99, and cysteine 107. NAD(+) contacts are provided by residues isoleucine 175, aspartate 195, arginine 200, 262–264 (LGI), and 286–287 (IY).

The protein belongs to the zinc-containing alcohol dehydrogenase family. Homotetramer. Requires Zn(2+) as cofactor.

The protein resides in the cytoplasm. The enzyme catalyses L-threonine + NAD(+) = (2S)-2-amino-3-oxobutanoate + NADH + H(+). It functions in the pathway amino-acid degradation; L-threonine degradation via oxydo-reductase pathway; glycine from L-threonine: step 1/2. Its function is as follows. Catalyzes the NAD(+)-dependent oxidation of L-threonine to 2-amino-3-ketobutyrate. This Burkholderia mallei (strain NCTC 10247) protein is L-threonine 3-dehydrogenase.